The chain runs to 135 residues: Class I hydrophobin 15 (135 aa).

An N-terminal signal peptide occupies residues 1-21; the sequence is MFAKSATIAIVLAALAGFSAA. 4 disulfides stabilise this stretch: cysteine 50/cysteine 113, cysteine 57/cysteine 107, cysteine 58/cysteine 97, and cysteine 114/cysteine 127. The N-linked (GlcNAc...) asparagine glycan is linked to asparagine 131.

Belongs to the fungal hydrophobin family. In terms of assembly, self-assembles to form functional amyloid fibrils called rodlets. Self-assembly into fibrillar rodlets occurs spontaneously at hydrophobic:hydrophilic interfaces and the rodlets further associate laterally to form amphipathic monolayers.

The protein resides in the secreted. It is found in the cell wall. Aerial growth, conidiation, and dispersal of filamentous fungi in the environment rely upon a capability of their secreting small amphipathic proteins called hydrophobins (HPBs) with low sequence identity. Class I can self-assemble into an outermost layer of rodlet bundles on aerial cell surfaces, conferring cellular hydrophobicity that supports fungal growth, development and dispersal; whereas Class II form highly ordered films at water-air interfaces through intermolecular interactions but contribute nothing to the rodlet structure. In Pleurotus ostreatus (strain PC15) (Oyster mushroom), this protein is Class I hydrophobin 15.